Consider the following 247-residue polypeptide: Granzyme B(G,H) (247 aa).

The first 18 residues, 1–18, serve as a signal peptide directing secretion; sequence MKILLLLLTLSLASRTKA. Residues 19–20 constitute a propeptide, activation peptide; sequence GE. The Peptidase S1 domain maps to 21 to 245; sequence IIGGHEVKPH…FLSWIKKTMK (225 aa). C49 and C65 are oxidised to a cystine. The active-site Charge relay system is the H64. N-linked (GlcNAc...) asparagine glycosylation occurs at N71. D108 acts as the Charge relay system in catalysis. 2 disulfide bridges follow: C142–C209 and C173–C188. N182 carries an N-linked (GlcNAc...) asparagine glycan. Residue S203 is the Charge relay system of the active site.

Belongs to the peptidase S1 family. Granzyme subfamily.

It localises to the secreted. The protein localises to the cytolytic granule. It catalyses the reaction Preferential cleavage: -Asp-|-Xaa- &gt;&gt; -Asn-|-Xaa- &gt; -Met-|-Xaa-, -Ser-|-Xaa-.. Its activity is regulated as follows. Inactivated by the serine protease inhibitor diisopropylfluorophosphate. Functionally, abundant protease in the cytosolic granules of cytotoxic T-cells and NK-cells which activates caspase-independent pyroptosis when delivered into the target cell through the immunological synapse. It cleaves after Asp. Once delivered into the target cell, acts by catalyzing cleavage of gasdermin-E (GSDME), releasing the pore-forming moiety of GSDME, thereby triggering pyroptosis and target cell death. Seems to be linked to an activation cascade of caspases (aspartate-specific cysteine proteases) responsible for apoptosis execution. Cleaves caspase-3 and -9 (CASP3 and CASP9, respectively) to give rise to active enzymes mediating apoptosis. Cleaves and activates CASP7 in response to bacterial infection, promoting plasma membrane repair. The chain is Granzyme B(G,H) (Gzmb) from Mus musculus (Mouse).